Here is a 253-residue protein sequence, read N- to C-terminus: MVSSFTSAPRSGFYYFAQGWKLVSQPGIRRFVILPLLVNILLMGGAFWWLFTQLDVWIPTLMSYVPDWLQWLSYLLWPLAVISVLLVFGYFFSTIANWIAAPFNGLLAEQLEARLTGATPPDTGIFGIMKDVPRIMKREWQKFAWYLPRAIVLLILYLIPGIGQTVTPVLWFLFSAWMLAIQYCDYPFDNHKVPFKEMRTALRTRKITNMQFGALTSLFTMIPLLNLFIMPVAVCGATAMWVDCYRDKHAMWR.

Transmembrane regions (helical) follow at residues 31–51, 75–95, 151–171, and 222–242; these read FVILPLLVNILLMGGAFWWLF, LLWPLAVISVLLVFGYFFSTI, IVLLILYLIPGIGQTVTPVLW, and IPLLNLFIMPVAVCGATAMWV.

The protein belongs to the CysZ family.

The protein localises to the cell inner membrane. Its function is as follows. High affinity, high specificity proton-dependent sulfate transporter, which mediates sulfate uptake. Provides the sulfur source for the cysteine synthesis pathway. This is Sulfate transporter CysZ from Escherichia coli O8 (strain IAI1).